The primary structure comprises 494 residues: UPF0371 protein spyM18_1356 (494 aa).

The protein belongs to the UPF0371 family.

In Streptococcus pyogenes serotype M18 (strain MGAS8232), this protein is UPF0371 protein spyM18_1356.